Here is a 348-residue protein sequence, read N- to C-terminus: uncharacterized protein (348 aa).

The interval 132–348 is disordered; it reads SECRRSSDAL…QGTRRDSARL (217 aa). Over residues 161–178 the composition is skewed to low complexity; sequence STAPIPNAAISSARSSAR. Polar residues predominate over residues 192–207; it reads SRSSSETRSPGGTVQP. Residues 227-273 are compositionally biased toward low complexity; sequence AAGSLLPAPRPPASSASSPQAAAPAAPSATRLPRRTTPSAPRPSSRP. Positions 274-287 are enriched in pro residues; it reads ARPPIPAARPPPRR. Over residues 288 to 310 the composition is skewed to low complexity; that stretch reads TPGTPRPAAARARAPAGCSPARR.

This is an uncharacterized protein from Streptomyces fradiae (Streptomyces roseoflavus).